We begin with the raw amino-acid sequence, 180 residues long: Adenine phosphoribosyltransferase (180 aa).

An N-acetylserine modification is found at serine 2. Residues serine 4, serine 15, and serine 30 each carry the phosphoserine modification. Tyrosine 60 is subject to Phosphotyrosine. Serine 66 is subject to Phosphoserine. At lysine 114 the chain carries N6-acetyllysine. A Phosphothreonine modification is found at threonine 135.

Belongs to the purine/pyrimidine phosphoribosyltransferase family. As to quaternary structure, homodimer.

It is found in the cytoplasm. It catalyses the reaction AMP + diphosphate = 5-phospho-alpha-D-ribose 1-diphosphate + adenine. Its pathway is purine metabolism; AMP biosynthesis via salvage pathway; AMP from adenine: step 1/1. Catalyzes a salvage reaction resulting in the formation of AMP, that is energically less costly than de novo synthesis. The protein is Adenine phosphoribosyltransferase of Rattus norvegicus (Rat).